We begin with the raw amino-acid sequence, 96 residues long: MKRILLALLRIYKIALSPYLGSQCRFLPTCSDYARDAIVQHGAARGTWMAACRLCRCHPFTKGGYDPVPATHGTAAAPPASAAPGRPPVTVRLPRP.

Low complexity predominate over residues 71–84; it reads THGTAAAPPASAAP. The disordered stretch occupies residues 71 to 96; sequence THGTAAAPPASAAPGRPPVTVRLPRP.

This sequence belongs to the UPF0161 family.

The protein localises to the cell inner membrane. Functionally, could be involved in insertion of integral membrane proteins into the membrane. The sequence is that of Putative membrane protein insertion efficiency factor from Cupriavidus metallidurans (strain ATCC 43123 / DSM 2839 / NBRC 102507 / CH34) (Ralstonia metallidurans).